We begin with the raw amino-acid sequence, 479 residues long: Putative F-box protein At1g67390 (479 aa).

The F-box domain occupies 40–88; the sequence is DDRISKLPDDVLVMILASLSTEDALKTSVLSTRWKNVWKQVPYLHFDLL.

The protein is Putative F-box protein At1g67390 of Arabidopsis thaliana (Mouse-ear cress).